We begin with the raw amino-acid sequence, 306 residues long: Tyrosine recombinase XerC (306 aa).

Residues 2–81 (AKASAAIEEF…ALRQFYGFLV (80 aa)) enclose the Core-binding (CB) domain. In terms of domain architecture, Tyr recombinase spans 102 to 283 (PLPKTLSHKE…DAARLVALVN (182 aa)). Catalysis depends on residues arginine 146, lysine 170, histidine 235, arginine 238, and histidine 261. The active-site O-(3'-phospho-DNA)-tyrosine intermediate is tyrosine 270.

It belongs to the 'phage' integrase family. XerC subfamily. In terms of assembly, forms a cyclic heterotetrameric complex composed of two molecules of XerC and two molecules of XerD.

It is found in the cytoplasm. Site-specific tyrosine recombinase, which acts by catalyzing the cutting and rejoining of the recombining DNA molecules. The XerC-XerD complex is essential to convert dimers of the bacterial chromosome into monomers to permit their segregation at cell division. It also contributes to the segregational stability of plasmids. The sequence is that of Tyrosine recombinase XerC from Erythrobacter litoralis (strain HTCC2594).